The following is a 1202-amino-acid chain: DNA-directed RNA polymerase subunit beta (1202 aa).

This sequence belongs to the RNA polymerase beta chain family. The RNAP catalytic core consists of 2 alpha, 1 beta, 1 beta' and 1 omega subunit. When a sigma factor is associated with the core the holoenzyme is formed, which can initiate transcription.

The catalysed reaction is RNA(n) + a ribonucleoside 5'-triphosphate = RNA(n+1) + diphosphate. Functionally, DNA-dependent RNA polymerase catalyzes the transcription of DNA into RNA using the four ribonucleoside triphosphates as substrates. In Mycoplasmopsis synoviae (strain 53) (Mycoplasma synoviae), this protein is DNA-directed RNA polymerase subunit beta.